Reading from the N-terminus, the 339-residue chain is ADP,ATP carrier protein (339 aa).

Solcar repeat units lie at residues 39–133 (MAFV…IKGL), 145–234 (RFFV…AKGV), and 246–328 (AKWA…IKKF). The next 5 membrane-spanning stretches (helical) occupy residues 41–70 (FVKDLLAGGTAGAISKTAVAPIERVKLLLQ), 110–134 (LANVVRYFPTQAFNFAFKDTIKGLF), 144–164 (WRFFVVNLASGGLAGAGSLLI), 212–232 (VSVQGIIVYRGAYFGLYDTAK), and 245–265 (FAKWAVAQAVTAGAGVLSYPF). Arginine 115 and lysine 127 together coordinate ADP. Arginine 269 provides a ligand contact to ADP. The tract at residues 269–274 (RRRLMM) is important for transport activity. The Nucleotide carrier signature motif motif lies at 269–274 (RRRLMM). A helical transmembrane segment spans residues 305–322 (AWSNVLRGAGGAFVLVLY).

This sequence belongs to the mitochondrial carrier (TC 2.A.29) family. Monomer.

The protein resides in the mitochondrion inner membrane. The catalysed reaction is ADP(in) + ATP(out) = ADP(out) + ATP(in). The matrix-open state (m-state) is inhibited by the membrane-permeable bongkrekic acid (BKA). The cytoplasmic-open state (c-state) is inhibited by the membrane-impermeable toxic inhibitor carboxyatractyloside (CATR). In terms of biological role, ADP:ATP antiporter that mediates import of ADP into the mitochondrial matrix for ATP synthesis, and export of ATP out to fuel the cell. Cycles between the cytoplasmic-open state (c-state) and the matrix-open state (m-state): operates by the alternating access mechanism with a single substrate-binding site intermittently exposed to either the cytosolic (c-state) or matrix (m-state) side of the inner mitochondrial membrane. This is ADP,ATP carrier protein from Parachlorella kessleri (Green alga).